A 663-amino-acid chain; its full sequence is Protein KINESIN LIGHT CHAIN-RELATED 2 (663 aa).

Over residues 1–14 (MDVGESNERVKDDS) the composition is skewed to basic and acidic residues. Disordered regions lie at residues 1–24 (MDVGESNERVKDDSALQASPRSPL) and 86–146 (GESK…KVSV). Ser-19 is subject to Phosphoserine. The span at 86 to 100 (GESKKEIILEKKEES) shows a compositional bias: basic and acidic residues. Positions 102–111 (GEGSLSQKKP) are enriched in polar residues. TPR repeat units follow at residues 147–181 (DEESPELGVVLLKQARELVSSGENLNKALDLALRA), 200–233 (VMSLHILAAIYAGLGRYNDAVPVLERSIEIPMIE), 243–276 (FAGCMQLGDMYGLMGQVENSIMLYTAGLEIQRQV), 285–318 (GETCRYLAEAHVQAMQFEEASRLCQMALDIHKEN), 329–363 (AADRKLMGLICDAKGDYEVALEHYVLASMAMSSQN), 369–402 (AAVDCSIGDAYMSLARFDEAIFAYQKALAVFKQG), 411–444 (ALVYVRLADLYNKIGKTRDSKSYCENALKIYLKP), 454–487 (ATGFIEISAIYQSMNELDQALKLLRRALKIYANA), 495–528 (AGIEAQMGVVTYMMGNYSESYDIFKSAISKFRNS), 537–570 (GIALNQMGLACVQRYAINEAADLFEEAKTILEKE), and 579–612 (LAVYSNLAGTYDAMGRLDDAIEILEYVVGTREEK).

This sequence belongs to the kinesin light chain family.

The sequence is that of Protein KINESIN LIGHT CHAIN-RELATED 2 from Arabidopsis thaliana (Mouse-ear cress).